A 277-amino-acid polypeptide reads, in one-letter code: 4-hydroxy-tetrahydrodipicolinate reductase (277 aa).

NAD(+) is bound at residue 9 to 14 (GATGRM). An NADP(+)-binding site is contributed by lysine 37. An NAD(+)-binding site is contributed by 75-77 (GTS). Histidine 132 serves as the catalytic Proton donor/acceptor. Lysine 136 serves as the catalytic Proton donor. Position 142–143 (142–143 (GT)) interacts with (S)-2,3,4,5-tetrahydrodipicolinate. Residues 245–277 (SRERATQTAPTGAASGPVDDGGPSGQAATVTSA) form a disordered region.

The protein belongs to the DapB family.

The protein resides in the cytoplasm. The catalysed reaction is (S)-2,3,4,5-tetrahydrodipicolinate + NAD(+) + H2O = (2S,4S)-4-hydroxy-2,3,4,5-tetrahydrodipicolinate + NADH + H(+). It carries out the reaction (S)-2,3,4,5-tetrahydrodipicolinate + NADP(+) + H2O = (2S,4S)-4-hydroxy-2,3,4,5-tetrahydrodipicolinate + NADPH + H(+). It participates in amino-acid biosynthesis; L-lysine biosynthesis via DAP pathway; (S)-tetrahydrodipicolinate from L-aspartate: step 4/4. Functionally, catalyzes the conversion of 4-hydroxy-tetrahydrodipicolinate (HTPA) to tetrahydrodipicolinate. This chain is 4-hydroxy-tetrahydrodipicolinate reductase, found in Clavibacter sepedonicus (Clavibacter michiganensis subsp. sepedonicus).